The chain runs to 382 residues: Gap junction alpha-1 protein (382 aa).

Topologically, residues 2 to 23 (GDWSALGKLLDKVQAYSTAGGK) are cytoplasmic. S5 bears the Phosphoserine mark. A helical membrane pass occupies residues 24-44 (VWLSVLFIFRILLLGTAVESA). At 45–76 (WGDEQSAFRCNTQQPGCENVCYDKSFPISHVR) the chain is on the extracellular side. Intrachain disulfides connect C54-C192 and C187-C198. Residues 77-97 (FWVLQIIFVSVPTLLYLAHVF) traverse the membrane as a helical segment. Topologically, residues 98-155 (YVMRKEEKLNKKEEELKVAQTDGVNVEMHLKQIEIKKFKYGIEEHGKVKMRGGLLRTY) are cytoplasmic. K144 is covalently cross-linked (Glycyl lysine isopeptide (Lys-Gly) (interchain with G-Cter in SUMO)). The chain crosses the membrane as a helical span at residues 156-176 (IISILFKSVFEVAFLLIQWYI). The Extracellular segment spans residues 177–207 (YGFSLSAVYTCKRDPCPHQVDCFLSRPTEKT). The helical transmembrane segment at 208 to 228 (IFIIFMLVVSLVSLALNIIEL) threads the bilayer. Residues 229–382 (FYVFFKGVKD…SRPRPDDLEI (154 aa)) are Cytoplasmic-facing. A Glycyl lysine isopeptide (Lys-Gly) (interchain with G-Cter in SUMO) cross-link involves residue K237. Residues 244 to 382 (SDPYHATTGP…SRPRPDDLEI (139 aa)) form an interaction with NOV region. A Phosphotyrosine modification is found at Y247. Phosphoserine occurs at positions 255, 257, and 262. Positions 264–382 (KYAYFNGCSS…SRPRPDDLEI (119 aa)) are interaction with UBQLN4. An S-nitrosocysteine modification is found at C271. T275 carries the post-translational modification Phosphothreonine. S306 and S314 each carry phosphoserine. Residues 317-332 (QNRMGQAGSTISNSHA) are compositionally biased toward polar residues. The segment at 317 to 382 (QNRMGQAGST…SRPRPDDLEI (66 aa)) is disordered. Position 325 is a phosphoserine; by CK1 (S325). At T326 the chain carries Phosphothreonine. A phosphoserine; by CK1 mark is found at S328 and S330. Phosphoserine is present on residues S344 and S365. Residues 362–374 (RPSSRASSRASSR) are compositionally biased toward low complexity. At S368 the chain carries Phosphoserine; by PKC/PRKCG and PKC/PRKCD. Phosphoserine occurs at positions 369 and 373.

The protein belongs to the connexin family. Alpha-type (group II) subfamily. In terms of assembly, a connexon is composed of a hexamer of connexins. Interacts with SGSM3. Interacts with RIC1/CIP150. Interacts with CNST and CSNK1D. Interacts (via C-terminus) with TJP1. Interacts (via C-terminus) with SRC (via SH3 domain). Interacts (not ubiquitinated) with UBQLN4 (via UBA domain). Interacts with NOV. Interacts with TMEM65. Interacts with ANK3/ANKG and PKP2. In terms of processing, phosphorylation at Ser-325, Ser-328 and Ser-330 by CK1 modulates gap junction assembly. Phosphorylated at Ser-368 by PRKCG; phosphorylation induces disassembly of gap junction plaques and inhibition of gap junction activity. Phosphorylation at Ser-368 by PRKCD triggers its internalization into small vesicles leading to proteasome-mediated degradation. Post-translationally, sumoylated with SUMO1, SUMO2 and SUMO3, which may regulate the level of functional Cx43 gap junctions at the plasma membrane. May be desumoylated by SENP1 or SENP2. S-nitrosylation at Cys-271 is enriched at the muscle endothelial gap junction in arteries, it augments channel permeability and may regulate of smooth muscle cell to endothelial cell communication. In terms of processing, acetylated in the developing cortex; leading to delocalization from the cell membrane.

The protein localises to the cell membrane. Its subcellular location is the cell junction. It is found in the gap junction. It localises to the endoplasmic reticulum. Functionally, gap junction protein that acts as a regulator of bladder capacity. A gap junction consists of a cluster of closely packed pairs of transmembrane channels, the connexons, through which materials of low MW diffuse from one cell to a neighboring cell. May play a critical role in the physiology of hearing by participating in the recycling of potassium to the cochlear endolymph. Negative regulator of bladder functional capacity: acts by enhancing intercellular electrical and chemical transmission, thus sensitizing bladder muscles to cholinergic neural stimuli and causing them to contract. May play a role in cell growth inhibition through the regulation of NOV expression and localization. Plays an essential role in gap junction communication in the ventricles. The chain is Gap junction alpha-1 protein (GJA1) from Oryctolagus cuniculus (Rabbit).